Reading from the N-terminus, the 470-residue chain is Glutathione reductase (470 aa).

The FAD site is built by serine 16 and glycine 17. Position 16 (serine 16) interacts with glutathione. Arginine 23 serves as a coordination point for glutathione. FAD-binding residues include glutamate 36, threonine 43, cysteine 44, and lysine 52. The cysteines at positions 44 and 49 are disulfide-linked. Tyrosine 104 lines the glutathione pocket. Residue alanine 120 coordinates FAD. Residues glycine 190, isoleucine 193, glutamate 196, arginine 213, and arginine 219 each coordinate NADP(+). Threonine 228 is a binding site for glutathione. NADP(+) is bound at residue glycine 280. Residue aspartate 321 coordinates FAD. Glutamate 327 is an NADP(+) binding site. Threonine 329 is a binding site for FAD. Residue arginine 337 participates in glutathione binding. Alanine 362 contributes to the NADP(+) binding site. A glutathione-binding site is contributed by lysine 412. Histidine 459 is a binding site for FAD. The active-site Proton acceptor is histidine 459.

It belongs to the class-I pyridine nucleotide-disulfide oxidoreductase family. In terms of assembly, homodimer. FAD serves as cofactor.

The protein resides in the cytoplasm. It localises to the mitochondrion. It carries out the reaction 2 glutathione + NADP(+) = glutathione disulfide + NADPH + H(+). In terms of biological role, catalyzes the reduction of glutathione disulfide (GSSG) to reduced glutathione (GSH). Constitutes the major mechanism to maintain a high GSH:GSSG ratio in the cytosol. The polypeptide is Glutathione reductase (GLR1) (Yarrowia lipolytica (strain CLIB 122 / E 150) (Yeast)).